A 222-amino-acid polypeptide reads, in one-letter code: Transmembrane protein 54 (222 aa).

Helical transmembrane passes span 22–42, 62–82, 100–120, and 155–175; these read LVLV…HGTV, ILSV…IVLS, ACAL…AMTF, and SSLC…VFAV.

Belongs to the TMEM54 family. In terms of tissue distribution, ubiquitously expressed in cancer cell lines.

The protein localises to the membrane. This chain is Transmembrane protein 54 (TMEM54), found in Homo sapiens (Human).